Reading from the N-terminus, the 99-residue chain is A-type ATP synthase subunit F (99 aa).

Belongs to the V-ATPase F subunit family. As to quaternary structure, has multiple subunits with at least A(3), B(3), C, D, E, F, H, I and proteolipid K(x).

It is found in the cell membrane. In terms of biological role, component of the A-type ATP synthase that produces ATP from ADP in the presence of a proton gradient across the membrane. The chain is A-type ATP synthase subunit F from Methanocella arvoryzae (strain DSM 22066 / NBRC 105507 / MRE50).